The primary structure comprises 545 residues: Probable protein kinase UbiB (545 aa).

The Protein kinase domain maps to 123–501 (DFEPIALASA…QIKQRQSQYL (379 aa)). Residues 129-137 (LASASIAQV) and lysine 152 each bind ATP. Aspartate 287 (proton acceptor) is an active-site residue. The helical transmembrane segment at 508-528 (LFLCGSLFLLSGLANIPWLFI) threads the bilayer.

Belongs to the ABC1 family. UbiB subfamily.

The protein localises to the cell inner membrane. It participates in cofactor biosynthesis; ubiquinone biosynthesis [regulation]. Functionally, is probably a protein kinase regulator of UbiI activity which is involved in aerobic coenzyme Q (ubiquinone) biosynthesis. This chain is Probable protein kinase UbiB, found in Photorhabdus laumondii subsp. laumondii (strain DSM 15139 / CIP 105565 / TT01) (Photorhabdus luminescens subsp. laumondii).